The primary structure comprises 175 residues: Transcriptional activatory protein BadR (175 aa).

Residues 20 to 156 (ANRLFFRLYQ…TLHYLLKILD (137 aa)) enclose the HTH marR-type domain.

Transcriptional activator of genes for the anaerobic degradation of benzoate. In Rhodopseudomonas palustris (strain ATCC BAA-98 / CGA009), this protein is Transcriptional activatory protein BadR (badR).